The sequence spans 119 residues: Ribonuclease P protein component (119 aa).

The protein belongs to the RnpA family. As to quaternary structure, consists of a catalytic RNA component (M1 or rnpB) and a protein subunit.

The enzyme catalyses Endonucleolytic cleavage of RNA, removing 5'-extranucleotides from tRNA precursor.. In terms of biological role, RNaseP catalyzes the removal of the 5'-leader sequence from pre-tRNA to produce the mature 5'-terminus. It can also cleave other RNA substrates such as 4.5S RNA. The protein component plays an auxiliary but essential role in vivo by binding to the 5'-leader sequence and broadening the substrate specificity of the ribozyme. The chain is Ribonuclease P protein component from Citrobacter koseri (strain ATCC BAA-895 / CDC 4225-83 / SGSC4696).